The sequence spans 180 residues: 3-phenylpropionate/cinnamic acid dioxygenase subunit beta (180 aa).

The protein belongs to the bacterial ring-hydroxylating dioxygenase beta subunit family. As to quaternary structure, this dioxygenase system consists of four proteins: the two subunits of the hydroxylase component (HcaE and HcaF), a ferredoxin (HcaC) and a ferredoxin reductase (HcaD).

It catalyses the reaction 3-phenylpropanoate + NADH + O2 + H(+) = 3-(cis-5,6-dihydroxycyclohexa-1,3-dien-1-yl)propanoate + NAD(+). It carries out the reaction (E)-cinnamate + NADH + O2 + H(+) = (2E)-3-(cis-5,6-dihydroxycyclohexa-1,3-dien-1-yl)prop-2-enoate + NAD(+). It functions in the pathway aromatic compound metabolism; 3-phenylpropanoate degradation. Part of the multicomponent 3-phenylpropionate dioxygenase. Converts 3-phenylpropionic acid (PP) and cinnamic acid (CI) into 3-phenylpropionate-dihydrodiol (PP-dihydrodiol) and cinnamic acid-dihydrodiol (CI-dihydrodiol), respectively. The protein is 3-phenylpropionate/cinnamic acid dioxygenase subunit beta of Photorhabdus laumondii subsp. laumondii (strain DSM 15139 / CIP 105565 / TT01) (Photorhabdus luminescens subsp. laumondii).